The following is a 310-amino-acid chain: Methionyl-tRNA formyltransferase (310 aa).

Residue 110-113 coordinates (6S)-5,6,7,8-tetrahydrofolate; it reads SLLP.

This sequence belongs to the Fmt family.

It carries out the reaction L-methionyl-tRNA(fMet) + (6R)-10-formyltetrahydrofolate = N-formyl-L-methionyl-tRNA(fMet) + (6S)-5,6,7,8-tetrahydrofolate + H(+). Attaches a formyl group to the free amino group of methionyl-tRNA(fMet). The formyl group appears to play a dual role in the initiator identity of N-formylmethionyl-tRNA by promoting its recognition by IF2 and preventing the misappropriation of this tRNA by the elongation apparatus. The protein is Methionyl-tRNA formyltransferase of Streptomyces avermitilis (strain ATCC 31267 / DSM 46492 / JCM 5070 / NBRC 14893 / NCIMB 12804 / NRRL 8165 / MA-4680).